Here is a 102-residue protein sequence, read N- to C-terminus: Large ribosomal subunit protein bL21 (102 aa).

Over residues 77-88 (KPKKHTHTKQGH) the composition is skewed to basic residues. A disordered region spans residues 77 to 102 (KPKKHTHTKQGHRQPYTKVTINKINA). Residues 93 to 102 (TKVTINKINA) are compositionally biased toward polar residues.

It belongs to the bacterial ribosomal protein bL21 family. As to quaternary structure, part of the 50S ribosomal subunit. Contacts protein L20.

Functionally, this protein binds to 23S rRNA in the presence of protein L20. In Limosilactobacillus reuteri (strain DSM 20016) (Lactobacillus reuteri), this protein is Large ribosomal subunit protein bL21.